The primary structure comprises 165 residues: UPF0303 protein BMA1246 (165 aa).

Belongs to the UPF0303 family.

The sequence is that of UPF0303 protein BMA1246 from Burkholderia mallei (strain ATCC 23344).